The primary structure comprises 79 residues: DNA-directed RNA polymerase subunit omega (79 aa).

This sequence belongs to the RNA polymerase subunit omega family. As to quaternary structure, in cyanobacteria the RNAP catalytic core is composed of 2 alpha, 1 beta, 1 beta', 1 gamma and 1 omega subunit. When a sigma factor is associated with the core the holoenzyme is formed, which can initiate transcription.

The catalysed reaction is RNA(n) + a ribonucleoside 5'-triphosphate = RNA(n+1) + diphosphate. Its function is as follows. Promotes RNA polymerase assembly. Latches the N- and C-terminal regions of the beta' subunit thereby facilitating its interaction with the beta and alpha subunits. This is DNA-directed RNA polymerase subunit omega from Synechococcus sp. (strain JA-3-3Ab) (Cyanobacteria bacterium Yellowstone A-Prime).